Reading from the N-terminus, the 510-residue chain is Laccase (510 aa).

Plastocyanin-like domains follow at residues 45–79 (PTKL…LPLK), 99–174 (KTVV…LISD), 242–317 (YLEV…IVLK), and 372–506 (LTLT…MRPM). Residues histidine 103, histidine 105, histidine 151, and histidine 153 each coordinate Cu cation. Positions 419, 422, 424, 491, 492, 493, 497, and 502 each coordinate Cu cation.

Belongs to the multicopper oxidase family. Cu(2+) is required as a cofactor.

It catalyses the reaction 4 hydroquinone + O2 = 4 benzosemiquinone + 2 H2O. Resistant to alkali and organic solvents such as methanol, ethanol and acetone. Resistant to EDTA, which might be explained by the spatial protection of copper ions in the active sites. Inhibited by DMSO. Strongly inhibited by Fe(2+) and DTT. Functionally, multicopper oxidase that catalyzes the oxidation of a variety of substrates, including phenolic and non-phenolic compounds. Substrates include 2,6-dimethoxyphenol (2,6-DMP) and the non-phenolic compound 2,2'-azino-bis(3-ethylbenzothiazoline-6-sulfonic acid) (ABTS). Cannot use guaiacol and catechol. In Bacillus stratosphericus, this protein is Laccase.